Here is a 213-residue protein sequence, read N- to C-terminus: Small ribosomal subunit protein uS4 (213 aa).

The S4 RNA-binding domain maps to 97-165 (RRLDNVVYRM…AKEQLRIKNA (69 aa)).

This sequence belongs to the universal ribosomal protein uS4 family. In terms of assembly, part of the 30S ribosomal subunit. Contacts protein S5. The interaction surface between S4 and S5 is involved in control of translational fidelity.

One of the primary rRNA binding proteins, it binds directly to 16S rRNA where it nucleates assembly of the body of the 30S subunit. Its function is as follows. With S5 and S12 plays an important role in translational accuracy. The chain is Small ribosomal subunit protein uS4 from Psychrobacter sp. (strain PRwf-1).